A 225-amino-acid chain; its full sequence is Pyridoxine/pyridoxamine 5'-phosphate oxidase (225 aa).

Substrate contacts are provided by residues 9 to 12 and K78; that span reads RVDY. FMN-binding positions include 73–78, 88–89, K95, and Q117; these read RTVLCK and YT. Substrate-binding residues include Y135, R139, and S143. Residues 152-153 and W198 each bind FMN; that span reads QS. 204–206 is a substrate binding site; sequence RLH. Position 208 (R208) interacts with FMN.

Belongs to the pyridoxamine 5'-phosphate oxidase family. As to quaternary structure, homodimer. FMN serves as cofactor.

It catalyses the reaction pyridoxamine 5'-phosphate + O2 + H2O = pyridoxal 5'-phosphate + H2O2 + NH4(+). The catalysed reaction is pyridoxine 5'-phosphate + O2 = pyridoxal 5'-phosphate + H2O2. It participates in cofactor metabolism; pyridoxal 5'-phosphate salvage; pyridoxal 5'-phosphate from pyridoxamine 5'-phosphate: step 1/1. The protein operates within cofactor metabolism; pyridoxal 5'-phosphate salvage; pyridoxal 5'-phosphate from pyridoxine 5'-phosphate: step 1/1. Its function is as follows. Catalyzes the oxidation of either pyridoxine 5'-phosphate (PNP) or pyridoxamine 5'-phosphate (PMP) into pyridoxal 5'-phosphate (PLP). The protein is Pyridoxine/pyridoxamine 5'-phosphate oxidase of Nocardia farcinica (strain IFM 10152).